The following is a 322-amino-acid chain: Putative pyruvyl transferase EpsO (322 aa).

It belongs to the polysaccharide pyruvyl transferase family.

Functionally, may be involved in the production of the exopolysaccharide (EPS) component of the extracellular matrix during biofilm formation. EPS is responsible for the adhesion of chains of cells into bundles. In Bacillus subtilis (strain 168), this protein is Putative pyruvyl transferase EpsO (epsO).